The following is a 160-amino-acid chain: Endoribonuclease YbeY (160 aa).

Zn(2+)-binding residues include His-121, His-125, and His-131.

It belongs to the endoribonuclease YbeY family. Requires Zn(2+) as cofactor.

Its subcellular location is the cytoplasm. Single strand-specific metallo-endoribonuclease involved in late-stage 70S ribosome quality control and in maturation of the 3' terminus of the 16S rRNA. This is Endoribonuclease YbeY from Hydrogenovibrio crunogenus (strain DSM 25203 / XCL-2) (Thiomicrospira crunogena).